A 325-amino-acid polypeptide reads, in one-letter code: Glutaminase (325 aa).

7 residues coordinate substrate: Ser-76, Asn-125, Glu-169, Asn-176, Tyr-200, Tyr-252, and Val-270.

This sequence belongs to the glutaminase family. As to quaternary structure, homotetramer.

It carries out the reaction L-glutamine + H2O = L-glutamate + NH4(+). This is Glutaminase from Clavibacter michiganensis subsp. michiganensis (strain NCPPB 382).